The following is a 655-amino-acid chain: tRNA 5-methylaminomethyl-2-thiouridine biosynthesis bifunctional protein MnmC (655 aa).

Positions 1 to 236 (MTDPLVPAVL…KRAMLVGRFA (236 aa)) are tRNA (mnm(5)s(2)U34)-methyltransferase. The FAD-dependent cmnm(5)s(2)U34 oxidoreductase stretch occupies residues 260-655 (IGTGLAGCAA…LRALRQGTAS (396 aa)).

This sequence in the N-terminal section; belongs to the methyltransferase superfamily. tRNA (mnm(5)s(2)U34)-methyltransferase family. In the C-terminal section; belongs to the DAO family. FAD is required as a cofactor.

It localises to the cytoplasm. It carries out the reaction 5-aminomethyl-2-thiouridine(34) in tRNA + S-adenosyl-L-methionine = 5-methylaminomethyl-2-thiouridine(34) in tRNA + S-adenosyl-L-homocysteine + H(+). In terms of biological role, catalyzes the last two steps in the biosynthesis of 5-methylaminomethyl-2-thiouridine (mnm(5)s(2)U) at the wobble position (U34) in tRNA. Catalyzes the FAD-dependent demodification of cmnm(5)s(2)U34 to nm(5)s(2)U34, followed by the transfer of a methyl group from S-adenosyl-L-methionine to nm(5)s(2)U34, to form mnm(5)s(2)U34. In Paraburkholderia phymatum (strain DSM 17167 / CIP 108236 / LMG 21445 / STM815) (Burkholderia phymatum), this protein is tRNA 5-methylaminomethyl-2-thiouridine biosynthesis bifunctional protein MnmC.